The following is an 870-amino-acid chain: Outer membrane usher protein FimD (870 aa).

The N-terminal stretch at 1 to 27 (MKKTTWFAGRFPGYVSPLSSVALSVLA) is a signal peptide. Cys-843 and Cys-865 are oxidised to a cystine.

It belongs to the fimbrial export usher family.

The protein resides in the cell outer membrane. Involved in the export and assembly of FimA fimbrial subunits across the outer membrane. This Salmonella typhimurium (strain LT2 / SGSC1412 / ATCC 700720) protein is Outer membrane usher protein FimD (fimD).